The primary structure comprises 62 residues: Cytotoxin homolog (62 aa).

4 cysteine pairs are disulfide-bonded: Cys3/Cys22, Cys15/Cys40, Cys44/Cys55, and Cys56/Cys61.

The protein belongs to the three-finger toxin family. Short-chain subfamily. Orphan group XV sub-subfamily. As to expression, expressed by the venom gland.

It is found in the secreted. It localises to the target cell membrane. In terms of biological role, has low cytotoxic activity. The chain is Cytotoxin homolog from Naja kaouthia (Monocled cobra).